Reading from the N-terminus, the 562-residue chain is NAD-dependent malic enzyme (562 aa).

Catalysis depends on Tyr101, which acts as the Proton donor. Arg154 is a binding site for NAD(+). The active-site Proton acceptor is the Lys172. A divalent metal cation is bound by residues Glu243, Asp244, and Asp267. Residues Asp267 and Asn415 each contribute to the NAD(+) site.

Belongs to the malic enzymes family. Homotetramer. The cofactor is Mg(2+). It depends on Mn(2+) as a cofactor.

The catalysed reaction is (S)-malate + NAD(+) = pyruvate + CO2 + NADH. It catalyses the reaction oxaloacetate + H(+) = pyruvate + CO2. This is NAD-dependent malic enzyme from Shewanella pealeana (strain ATCC 700345 / ANG-SQ1).